The primary structure comprises 563 residues: Developmental regulatory protein wetA (563 aa).

2 stretches are compositionally biased toward polar residues: residues 54–69 (EQSPIISTSKQQTHPS) and 160–175 (HKQSFSPSLTRPSQFQ). Disordered stretches follow at residues 54-81 (EQSPIISTSKQQTHPSPQWAKDFWSLPP), 112-176 (ASST…QFQK), 272-318 (SNNS…PDLQ), 334-356 (PQRQPSYQQVVASPPPQQPIQNT), 430-494 (PQLH…SPKG), and 516-538 (GVAPSGSSKTKARREQEARDRRR). A compositionally biased stretch (low complexity) spans 272-305 (SNNSTVTSSPPSADDIFPSPHSSDPQSMSSWHSD). Residues 430–441 (PQLHPQSRSPSL) are compositionally biased toward polar residues.

Belongs to the wetA family.

In terms of biological role, brlA, abaA and wetA are pivotal regulators of conidiophore development and conidium maturation. They act individually and together to regulate their own expression and that of numerous other sporulation-specific genes. The polypeptide is Developmental regulatory protein wetA (Aspergillus oryzae (strain ATCC 42149 / RIB 40) (Yellow koji mold)).